A 364-amino-acid chain; its full sequence is MGQPLLLIAAGGTGGHMFPAQALAEAMVRRGWRVKLSTDARGARYAGGFPHVVEIDQVSSGTFARGGALARALVPARIAAGVASAVVGFLRDRPAVVVGFGGYPSIPALSAAVALRLPRMIHEQNGVLGRVNRLFAPRVDAVCCGTWPTDLPEGVEGYYTGNPVRAAVLERAAAPYIAPGDYPMSLVVIGGSQGARILSDVVPEAIARLPREILANLRIAHQAREEDVARVTEAYDRAGLLAEVKTFFTDIPRRLSEAQLVISRSGASSVADISIIGRPAILVPFAAATADHQTANARGFVEAEAAILIPESALDPGSLSEHIAAVLSQPEAARQMARNALAHGRPDATERLVEVVEHLARKET.

UDP-N-acetyl-alpha-D-glucosamine contacts are provided by residues Thr13–Gly15, Asn125, Arg165, Ser192, and Gln293.

This sequence belongs to the glycosyltransferase 28 family. MurG subfamily.

The protein localises to the cell inner membrane. It carries out the reaction di-trans,octa-cis-undecaprenyl diphospho-N-acetyl-alpha-D-muramoyl-L-alanyl-D-glutamyl-meso-2,6-diaminopimeloyl-D-alanyl-D-alanine + UDP-N-acetyl-alpha-D-glucosamine = di-trans,octa-cis-undecaprenyl diphospho-[N-acetyl-alpha-D-glucosaminyl-(1-&gt;4)]-N-acetyl-alpha-D-muramoyl-L-alanyl-D-glutamyl-meso-2,6-diaminopimeloyl-D-alanyl-D-alanine + UDP + H(+). Its pathway is cell wall biogenesis; peptidoglycan biosynthesis. In terms of biological role, cell wall formation. Catalyzes the transfer of a GlcNAc subunit on undecaprenyl-pyrophosphoryl-MurNAc-pentapeptide (lipid intermediate I) to form undecaprenyl-pyrophosphoryl-MurNAc-(pentapeptide)GlcNAc (lipid intermediate II). The sequence is that of UDP-N-acetylglucosamine--N-acetylmuramyl-(pentapeptide) pyrophosphoryl-undecaprenol N-acetylglucosamine transferase from Cereibacter sphaeroides (strain ATCC 17025 / ATH 2.4.3) (Rhodobacter sphaeroides).